The following is a 391-amino-acid chain: Phosphoglycerate kinase (391 aa).

Substrate contacts are provided by residues 21 to 23, Arg36, 59 to 62, Arg113, and Arg146; these read DLN and HLGR. Residues Lys197, Glu319, and 345–348 each bind ATP; that span reads GGDT.

It belongs to the phosphoglycerate kinase family. In terms of assembly, monomer.

It is found in the cytoplasm. It catalyses the reaction (2R)-3-phosphoglycerate + ATP = (2R)-3-phospho-glyceroyl phosphate + ADP. It participates in carbohydrate degradation; glycolysis; pyruvate from D-glyceraldehyde 3-phosphate: step 2/5. This chain is Phosphoglycerate kinase, found in Shewanella putrefaciens (strain CN-32 / ATCC BAA-453).